The chain runs to 321 residues: Tetraacyldisaccharide 4'-kinase (321 aa).

Position 54–61 (54–61) interacts with ATP; that stretch reads SVGGTGKT.

The protein belongs to the LpxK family.

It carries out the reaction a lipid A disaccharide + ATP = a lipid IVA + ADP + H(+). It participates in glycolipid biosynthesis; lipid IV(A) biosynthesis; lipid IV(A) from (3R)-3-hydroxytetradecanoyl-[acyl-carrier-protein] and UDP-N-acetyl-alpha-D-glucosamine: step 6/6. In terms of biological role, transfers the gamma-phosphate of ATP to the 4'-position of a tetraacyldisaccharide 1-phosphate intermediate (termed DS-1-P) to form tetraacyldisaccharide 1,4'-bis-phosphate (lipid IVA). The polypeptide is Tetraacyldisaccharide 4'-kinase (Rickettsia rickettsii).